The following is a 563-amino-acid chain: Quinidine resistance protein 1 (563 aa).

The segment covering 1–10 has biased composition (polar residues); it reads MTKQQTSVMR. The interval 1–50 is disordered; it reads MTKQQTSVMRNASIAKEEREGSDNNNVDRSSSDAISDNDAERSNSHSEID. Residues 1 to 75 lie on the Cytoplasmic side of the membrane; that stretch reads MTKQQTSVMR…KQKMLLVVQC (75 aa). Residues 23–33 show a composition bias toward low complexity; that stretch reads DNNNVDRSSSD. Residues 39 to 49 show a composition bias toward basic and acidic residues; that stretch reads DAERSNSHSEI. The helical transmembrane segment at 76-96 threads the bilayer; it reads AFTGFFSTVAGSIYYPVLTII. Residues 97–108 are Extracellular-facing; that stretch reads ERKFNITEELAN. A helical transmembrane segment spans residues 109-129; sequence VTIVVYFIFQGVAPSIMGGLA. Over 130-135 the chain is Cytoplasmic; sequence DTFGRR. A helical membrane pass occupies residues 136–156; the sequence is PIVLWAILAYFCACIGLACAH. At 157-165 the chain is on the extracellular side; the sequence is NYAQILALR. Residues 166 to 186 traverse the membrane as a helical segment; that stretch reads CLQAAGISPVIAINSGIMGDV. At 187 to 195 the chain is on the cytoplasmic side; it reads TTKVERGGY. A helical transmembrane segment spans residues 196 to 216; it reads VGLVAGFQVVGTAFGALIGAG. Residues 217–224 lie on the Extracellular side of the membrane; the sequence is LSSKWGWR. A helical membrane pass occupies residues 225–245; the sequence is AIFWFLAIGSGICLVFSTLLM. Over 246-296 the chain is Cytoplasmic; it reads PETKRTLVGNGSVTPRSFLNRSLILHVGSVKKTLHLDDPDPETLEPRTSVD. Residues 297-317 form a helical membrane-spanning segment; that stretch reads FLAPLKILHIREIDILLSIAG. The Extracellular segment spans residues 318–341; that stretch reads LQFSTWTTHQTALTIVLSKKYNLS. A helical transmembrane segment spans residues 342–362; sequence VAKIGLCFLPAGISTLTSIIS. At 363-421 the chain is on the cytoplasmic side; sequence AGRYLNWSYRTRKVKYNRWIKEQELQLMEKYKGDKNKVAELIHSNSHYAFNLVEARLHP. The chain crosses the membrane as a helical span at residues 422 to 442; sequence AFVTLLLSSIGFTAFGWCISV. Topologically, residues 443 to 445 are extracellular; the sequence is KTP. The chain crosses the membrane as a helical span at residues 446–466; the sequence is LAAVLCTSAFASLFSNCILTF. Residues 467–481 are Cytoplasmic-facing; that stretch reads STTLIVDLFPSKAST. The chain crosses the membrane as a helical span at residues 482 to 502; sequence ATGCLNLFRCLLSAIFIAALT. At 503-511 the chain is on the extracellular side; that stretch reads KMVEKMRYG. A helical transmembrane segment spans residues 512–532; sequence GVFTFLSAITSSSSLLLFYLL. Residues 533–563 lie on the Cytoplasmic side of the membrane; sequence KNGKQLSFDRIRANDKSAGRSVGKNSEKVST.

This sequence belongs to the major facilitator superfamily. CAR1 family.

Its subcellular location is the cell membrane. In terms of biological role, multidrug resistance transporter involved in resistance and adaptation to quinidine and ketoconazole. The sequence is that of Quinidine resistance protein 1 (QDR1) from Saccharomyces cerevisiae (strain ATCC 204508 / S288c) (Baker's yeast).